The primary structure comprises 446 residues: Saccharopine dehydrogenase [NADP(+), L-glutamate-forming] (446 aa).

NADP(+) contacts are provided by residues 10 to 13 (SGFV), 33 to 35 (CRT), 54 to 55 (DV), I75, 97 to 98 (SS), 124 to 126 (LDP), and S174. L-saccharopine-binding positions include 98–99 (SY) and D125. L-saccharopine-binding positions include R223 and 244–246 (TLR).

Belongs to the saccharopine dehydrogenase family. In terms of assembly, interacts with TRM112.

The catalysed reaction is L-saccharopine + NADP(+) + H2O = (S)-2-amino-6-oxohexanoate + L-glutamate + NADPH + H(+). It participates in amino-acid biosynthesis; L-lysine biosynthesis via AAA pathway; L-lysine from L-alpha-aminoadipate (fungal route): step 2/3. This chain is Saccharopine dehydrogenase [NADP(+), L-glutamate-forming] (LYS9), found in Saccharomyces cerevisiae (strain ATCC 204508 / S288c) (Baker's yeast).